We begin with the raw amino-acid sequence, 200 residues long: Lipopolysaccharide core heptose(II)-phosphate phosphatase (200 aa).

Residues 1-25 (MLAFCRSSLKSKKYIIILLALAAIA) form the signal peptide.

This sequence belongs to the phosphoglycerate mutase family. Ais subfamily.

Its subcellular location is the periplasm. The protein operates within bacterial outer membrane biogenesis; lipopolysaccharide metabolism. Functionally, catalyzes the dephosphorylation of heptose(II) of the outer membrane lipopolysaccharide core. In Escherichia coli (strain ATCC 8739 / DSM 1576 / NBRC 3972 / NCIMB 8545 / WDCM 00012 / Crooks), this protein is Lipopolysaccharide core heptose(II)-phosphate phosphatase.